Consider the following 210-residue polypeptide: Outer-membrane lipoprotein LolB (210 aa).

Positions 1 to 26 are cleaved as a signal peptide; the sequence is MSKLKIDTKRRFSLLIALVLIISLSS. Residue C27 is the site of N-palmitoyl cysteine attachment. A lipid anchor (S-diacylglycerol cysteine) is attached at C27.

The protein belongs to the LolB family. As to quaternary structure, monomer.

The protein resides in the cell outer membrane. Its function is as follows. Plays a critical role in the incorporation of lipoproteins in the outer membrane after they are released by the LolA protein. The sequence is that of Outer-membrane lipoprotein LolB from Francisella tularensis subsp. holarctica (strain FTNF002-00 / FTA).